The sequence spans 156 residues: Endoribonuclease YbeY (156 aa).

H122, H126, and H132 together coordinate Zn(2+).

It belongs to the endoribonuclease YbeY family. It depends on Zn(2+) as a cofactor.

It is found in the cytoplasm. Its function is as follows. Single strand-specific metallo-endoribonuclease involved in late-stage 70S ribosome quality control and in maturation of the 3' terminus of the 16S rRNA. This chain is Endoribonuclease YbeY, found in Bacillus cereus (strain ATCC 14579 / DSM 31 / CCUG 7414 / JCM 2152 / NBRC 15305 / NCIMB 9373 / NCTC 2599 / NRRL B-3711).